The following is a 1859-amino-acid chain: DNA-directed RNA polymerase subunit beta'' (1859 aa).

The Zn(2+) site is built by Cys-286, Cys-359, Cys-366, and Cys-369.

It belongs to the RNA polymerase beta' chain family. RpoC2 subfamily. In terms of assembly, in plastids the minimal PEP RNA polymerase catalytic core is composed of four subunits: alpha, beta, beta', and beta''. When a (nuclear-encoded) sigma factor is associated with the core the holoenzyme is formed, which can initiate transcription. Zn(2+) serves as cofactor.

The protein resides in the plastid. The protein localises to the chloroplast. It catalyses the reaction RNA(n) + a ribonucleoside 5'-triphosphate = RNA(n+1) + diphosphate. DNA-dependent RNA polymerase catalyzes the transcription of DNA into RNA using the four ribonucleoside triphosphates as substrates. The protein is DNA-directed RNA polymerase subunit beta'' of Oltmannsiellopsis viridis (Marine flagellate).